We begin with the raw amino-acid sequence, 232 residues long: Large ribosomal subunit protein uL1 (232 aa).

Belongs to the universal ribosomal protein uL1 family. As to quaternary structure, part of the 50S ribosomal subunit.

In terms of biological role, binds directly to 23S rRNA. The L1 stalk is quite mobile in the ribosome, and is involved in E site tRNA release. Functionally, protein L1 is also a translational repressor protein, it controls the translation of the L11 operon by binding to its mRNA. The protein is Large ribosomal subunit protein uL1 of Burkholderia cenocepacia (strain HI2424).